A 397-amino-acid polypeptide reads, in one-letter code: 1-deoxy-D-xylulose 5-phosphate reductoisomerase (397 aa).

The NADPH site is built by T17, G18, S19, I20, A45, N47, and N130. K131 provides a ligand contact to 1-deoxy-D-xylulose 5-phosphate. Position 132 (E132) interacts with NADPH. Residue D156 coordinates Mn(2+). 1-deoxy-D-xylulose 5-phosphate is bound by residues S157, E158, S182, and H205. E158 contacts Mn(2+). G211 provides a ligand contact to NADPH. 1-deoxy-D-xylulose 5-phosphate is bound by residues S218, N223, K224, and E227. Residue E227 participates in Mn(2+) binding.

Belongs to the DXR family. Requires Mg(2+) as cofactor. Mn(2+) is required as a cofactor.

The catalysed reaction is 2-C-methyl-D-erythritol 4-phosphate + NADP(+) = 1-deoxy-D-xylulose 5-phosphate + NADPH + H(+). It participates in isoprenoid biosynthesis; isopentenyl diphosphate biosynthesis via DXP pathway; isopentenyl diphosphate from 1-deoxy-D-xylulose 5-phosphate: step 1/6. Functionally, catalyzes the NADPH-dependent rearrangement and reduction of 1-deoxy-D-xylulose-5-phosphate (DXP) to 2-C-methyl-D-erythritol 4-phosphate (MEP). The polypeptide is 1-deoxy-D-xylulose 5-phosphate reductoisomerase (Agrobacterium fabrum (strain C58 / ATCC 33970) (Agrobacterium tumefaciens (strain C58))).